A 601-amino-acid chain; its full sequence is Elongation factor 4 (601 aa).

Residues 6–188 (AHIRNFSIIA…QIVRKVPPPK (183 aa)) enclose the tr-type G domain. Residues 18–23 (DHGKST) and 135–138 (NKVD) contribute to the GTP site.

This sequence belongs to the TRAFAC class translation factor GTPase superfamily. Classic translation factor GTPase family. LepA subfamily.

Its subcellular location is the cell inner membrane. The enzyme catalyses GTP + H2O = GDP + phosphate + H(+). Functionally, required for accurate and efficient protein synthesis under certain stress conditions. May act as a fidelity factor of the translation reaction, by catalyzing a one-codon backward translocation of tRNAs on improperly translocated ribosomes. Back-translocation proceeds from a post-translocation (POST) complex to a pre-translocation (PRE) complex, thus giving elongation factor G a second chance to translocate the tRNAs correctly. Binds to ribosomes in a GTP-dependent manner. The polypeptide is Elongation factor 4 (Anaeromyxobacter sp. (strain Fw109-5)).